The primary structure comprises 880 residues: MEQSVSARWLRRYRPVLIILVLIFGIQLFLAYKSVDIGGGSGSGLDVDAAQRSQRDLASNPVIAEPPESLPRPARLTANQLGFQPECDIQAKEAISALQRAKTKDCRQHIAQIACSIQAGRFYAIQLKSSCPSGNHTANVSLGCYRDEKDRRLLGGYYTSFKNSNSPNLCLELCLQSGYPYAGVQYGRECFCGFDTPPKAAKLPDSSCNIKCLGNAREICGGFYAMNIYETGIAKFTAQLAASTPPTGAKRVRIAFLLTINGRALRQVHRLLKALYAPEHVYYIHVDERQDYLYRKLLELEQKFPNIRLARKRFSTIWGGASLLTMLLQCMEDLLKSKWQWDFVINLSESDFPVKTLDKLVDFLSANRGRNFVKGHGRETQKFIQKQGLDRTFVECDTHMWRIGDRKLPAGIQVDGGSDWVALSRPFVAYVTHPKKEDELLQALLKLFRHTLLPAESFFHTVLRNTHHCHTYVDNNLHVTNWKRKQGCKCQYKHVVDWCGCSPNDFMPDDWPRLLATEQKSLFFARKFEPIINQAVLLQLEEWLYGPYTSEYLNLHGYWQSLYHHEDVHGSADDLVRSVGDSLMRLAGSQARVDPLELLELTHYLHRDQYKGFLVRFSARRATGQDVQLETRVRPVQHGKLARNARFSKRLRNFEVSTDFDQKEQVARNFGKLLGPQSDLVLSYTYQGSTDSGAASHSYNLTLLWIDPLGRLQDFNELHVEDSSTDLINHSKTLLSHPITPGVWTAKLIGRSSIYAQLKFLISPMAYGNGEPLETTPEAEKRNGGLGIALPDDFELPVEWQQHLHTDDEQFSLREEALANGKLTGPPLHRWIDDLVGKFFQLRESCVVDAGTELSLPLCSDAPWSSLAPDPKSDVDALLK.

The Cytoplasmic portion of the chain corresponds to 1-14 (MEQSVSARWLRRYR). A helical; Signal-anchor for type II membrane protein membrane pass occupies residues 15–35 (PVLIILVLIFGIQLFLAYKSV). The Lumenal portion of the chain corresponds to 36–880 (DIGGGSGSGL…PKSDVDALLK (845 aa)). 4 cysteine pairs are disulfide-bonded: Cys-87–Cys-115, Cys-131–Cys-469, Cys-488–Cys-501, and Cys-490–Cys-499. N-linked (GlcNAc...) asparagine glycans are attached at residues Asn-135 and Asn-139. One can recognise a WSC domain in the interval 138-232 (ANVSLGCYRD…FYAMNIYETG (95 aa)). Residues Asp-287 and 316 to 318 (TIW) contribute to the UDP-alpha-D-xylose site. Asn-346 is a glycosylation site (N-linked (GlcNAc...) asparagine). Residue 419–420 (DW) participates in UDP-alpha-D-xylose binding. UDP-alpha-D-xylose-binding positions include Ser-502 and 526–527 (RK). N-linked (GlcNAc...) asparagine glycosylation is found at Asn-700 and Asn-729. A disulfide bond links Cys-846 and Cys-859.

The protein belongs to the glycosyltransferase 14 family. XylT subfamily. It depends on Ca(2+) as a cofactor. Requires Mn(2+) as cofactor. Mg(2+) is required as a cofactor.

It localises to the endoplasmic reticulum membrane. The protein localises to the golgi apparatus membrane. It catalyses the reaction UDP-alpha-D-xylose + L-seryl-[protein] = 3-O-(beta-D-xylosyl)-L-seryl-[protein] + UDP + H(+). It participates in glycan metabolism; chondroitin sulfate biosynthesis. Its pathway is glycan metabolism; heparan sulfate biosynthesis. Its function is as follows. Catalyzes the first step in biosynthesis of glycosaminoglycan. Transfers D-xylose from UDP-D-xylose to specific serine residues of the core protein. The sequence is that of Xylosyltransferase oxt from Drosophila pseudoobscura pseudoobscura (Fruit fly).